The primary structure comprises 344 residues: Aspartate carbamoyltransferase catalytic subunit (344 aa).

The interval M1–D30 is disordered. Residues R88 and T89 each coordinate carbamoyl phosphate. K116 serves as a coordination point for L-aspartate. Positions 138, 166, and 169 each coordinate carbamoyl phosphate. Positions 199 and 253 each coordinate L-aspartate. Carbamoyl phosphate is bound by residues G294 and P295.

Belongs to the aspartate/ornithine carbamoyltransferase superfamily. ATCase family. Heterododecamer (2C3:3R2) of six catalytic PyrB chains organized as two trimers (C3), and six regulatory PyrI chains organized as three dimers (R2).

The enzyme catalyses carbamoyl phosphate + L-aspartate = N-carbamoyl-L-aspartate + phosphate + H(+). Its pathway is pyrimidine metabolism; UMP biosynthesis via de novo pathway; (S)-dihydroorotate from bicarbonate: step 2/3. In terms of biological role, catalyzes the condensation of carbamoyl phosphate and aspartate to form carbamoyl aspartate and inorganic phosphate, the committed step in the de novo pyrimidine nucleotide biosynthesis pathway. The sequence is that of Aspartate carbamoyltransferase catalytic subunit from Sphingopyxis alaskensis (strain DSM 13593 / LMG 18877 / RB2256) (Sphingomonas alaskensis).